The chain runs to 286 residues: Light-independent protochlorophyllide reductase iron-sulfur ATP-binding protein (286 aa).

ATP is bound by residues 10–15 and K39; that span reads GIGKST. Residue S14 participates in Mg(2+) binding. The [4Fe-4S] cluster site is built by C95 and C129. Residue 180–181 participates in ATP binding; sequence NR.

Belongs to the NifH/BchL/ChlL family. As to quaternary structure, homodimer. Protochlorophyllide reductase is composed of three subunits; ChlL, ChlN and ChlB. It depends on [4Fe-4S] cluster as a cofactor.

The catalysed reaction is chlorophyllide a + oxidized 2[4Fe-4S]-[ferredoxin] + 2 ADP + 2 phosphate = protochlorophyllide a + reduced 2[4Fe-4S]-[ferredoxin] + 2 ATP + 2 H2O. It functions in the pathway porphyrin-containing compound metabolism; chlorophyll biosynthesis (light-independent). Component of the dark-operative protochlorophyllide reductase (DPOR) that uses Mg-ATP and reduced ferredoxin to reduce ring D of protochlorophyllide (Pchlide) to form chlorophyllide a (Chlide). This reaction is light-independent. The L component serves as a unique electron donor to the NB-component of the complex, and binds Mg-ATP. The polypeptide is Light-independent protochlorophyllide reductase iron-sulfur ATP-binding protein (Cyanothece sp. (strain PCC 7425 / ATCC 29141)).